The following is a 638-amino-acid chain: Threonine--tRNA ligase (638 aa).

Positions 1–61 (MPIITLPDGS…NKDSKVVIIT (61 aa)) constitute a TGS domain. The catalytic stretch occupies residues 242–533 (DHRKLGKKHS…LIEQYEAKFP (292 aa)). Residues Cys-333, His-384, and His-510 each coordinate Zn(2+).

It belongs to the class-II aminoacyl-tRNA synthetase family. As to quaternary structure, homodimer. Zn(2+) is required as a cofactor.

It is found in the cytoplasm. The enzyme catalyses tRNA(Thr) + L-threonine + ATP = L-threonyl-tRNA(Thr) + AMP + diphosphate + H(+). Its function is as follows. Catalyzes the attachment of threonine to tRNA(Thr) in a two-step reaction: L-threonine is first activated by ATP to form Thr-AMP and then transferred to the acceptor end of tRNA(Thr). Also edits incorrectly charged L-seryl-tRNA(Thr). In Prochlorococcus marinus (strain AS9601), this protein is Threonine--tRNA ligase.